A 171-amino-acid chain; its full sequence is Cation channel sperm-associated auxiliary subunit TMEM249 (171 aa).

Residues 1-2 (ML) lie on the Cytoplasmic side of the membrane. A helical transmembrane segment spans residues 3 to 17 (FIICLVFISCNVLRE). At 18 to 28 (VKYQETWCFPA) the chain is on the extracellular side. A helical transmembrane segment spans residues 29–40 (YGMVIGLWLMLS). Over 41-171 (SIPQRRLVLN…TKSSVNDLDV (131 aa)) the chain is Cytoplasmic.

Component of the CatSper complex or CatSpermasome composed of the core pore-forming members CATSPER1, CATSPER2, CATSPER3 and CATSPER4 as well as auxiliary members CATSPERB, CATSPERG2, CATSPERD, CATSPERE, CATSPERZ, C2CD6/CATSPERT, SLCO6C1, TMEM249, TMEM262 and EFCAB9. HSPA1 may be an additional auxiliary complex member. The core complex members CATSPER1, CATSPER2, CATSPER3 and CATSPER4 form a heterotetrameric channel. The auxiliary CATSPERB, CATSPERG2, CATSPERD and CATSPERE subunits form a pavilion-like structure over the pore which stabilizes the complex through interactions with CATSPER4, CATSPER3, CATSPER1 and CATSPER2 respectively. SLCO6C1 interacts with CATSPERE and TMEM262/CATSPERH interacts with CATSPERB, further stabilizing the complex. C2CD6/CATSPERT interacts at least with CATSPERD and is required for targeting the CatSper complex in the flagellar membrane.

The protein localises to the cell projection. It is found in the cilium. The protein resides in the flagellum membrane. In terms of biological role, auxiliary component of the CatSper complex, a complex involved in sperm cell hyperactivation. The chain is Cation channel sperm-associated auxiliary subunit TMEM249 from Mus musculus (Mouse).